The sequence spans 303 residues: MNPTTEQVLSPGEIFRQTREALNLSLEDVAKEITLRPSILEQLENNEFIQKSTPAIFVKGYVRSYAKFLRLPDSVWENIVFAETEKNDLGKNARSTRAVNQYSSHNRWIGRLTAIVFMIVIGMTGLWWWQSYQQNTQERDDLVQSYVASTENNQPATALVTTEESNKTVPETAAPVSQPVEITNNLLPEIAQENSVSQPKNDEKSVSEIQSAVENPSISPTLPIAKGDLVIEILTNSSWISVKDNARHVLAQKEYKQGEILTFNGNEFSLIVGAPSNVRITYKGENYPLKVDGRVAKFKLSQP.

This is an uncharacterized protein from Haemophilus influenzae (strain ATCC 51907 / DSM 11121 / KW20 / Rd).